We begin with the raw amino-acid sequence, 235 residues long: UDP-2,3-diacylglucosamine hydrolase (235 aa).

Mn(2+)-binding residues include Asp-9, His-11, Asp-42, Asn-80, and His-115. 80–81 (NR) contacts substrate. Substrate contacts are provided by Asp-123, Ser-161, Lys-165, Lys-168, and His-196. Residues His-196 and His-198 each coordinate Mn(2+).

It belongs to the LpxH family. It depends on Mn(2+) as a cofactor.

It is found in the cell inner membrane. The enzyme catalyses UDP-2-N,3-O-bis[(3R)-3-hydroxytetradecanoyl]-alpha-D-glucosamine + H2O = 2-N,3-O-bis[(3R)-3-hydroxytetradecanoyl]-alpha-D-glucosaminyl 1-phosphate + UMP + 2 H(+). It functions in the pathway glycolipid biosynthesis; lipid IV(A) biosynthesis; lipid IV(A) from (3R)-3-hydroxytetradecanoyl-[acyl-carrier-protein] and UDP-N-acetyl-alpha-D-glucosamine: step 4/6. In terms of biological role, hydrolyzes the pyrophosphate bond of UDP-2,3-diacylglucosamine to yield 2,3-diacylglucosamine 1-phosphate (lipid X) and UMP by catalyzing the attack of water at the alpha-P atom. Involved in the biosynthesis of lipid A, a phosphorylated glycolipid that anchors the lipopolysaccharide to the outer membrane of the cell. This Actinobacillus succinogenes (strain ATCC 55618 / DSM 22257 / CCUG 43843 / 130Z) protein is UDP-2,3-diacylglucosamine hydrolase.